The following is a 232-amino-acid chain: Probable dihydroorotate dehydrogenase B (NAD(+)), electron transfer subunit (232 aa).

Residues 1–86 enclose the FAD-binding FR-type domain; it reads MYYTRITQIE…RGAFGSAFTP (86 aa). Residues cysteine 202, cysteine 207, cysteine 210, and cysteine 219 each coordinate [2Fe-2S] cluster.

Belongs to the PyrK family. As to quaternary structure, heterotetramer of 2 PyrK and 2 PyrD type B subunits. It depends on [2Fe-2S] cluster as a cofactor. The cofactor is FAD.

It functions in the pathway pyrimidine metabolism; UMP biosynthesis via de novo pathway; orotate from (S)-dihydroorotate (NAD(+) route): step 1/1. Responsible for channeling the electrons from the oxidation of dihydroorotate from the FMN redox center in the PyrD type B subunit to the ultimate electron acceptor NAD(+). This Archaeoglobus fulgidus (strain ATCC 49558 / DSM 4304 / JCM 9628 / NBRC 100126 / VC-16) protein is Probable dihydroorotate dehydrogenase B (NAD(+)), electron transfer subunit.